Reading from the N-terminus, the 205-residue chain is Putative protein phosphatase inhibitor 2-like protein 1 (205 aa).

Disordered regions lie at residues 1 to 44, 64 to 92, 107 to 148, and 171 to 205; these read MAAS…SKKS, GLMK…TETT, AEGL…TLHY, and VEEM…SRSS. 2 required for binding PPP1CC regions span residues 12–17 and 43–55; these read KGILKD and KSQK…ILAT. Over residues 17–26 the composition is skewed to polar residues; sequence DNTSTTSSMV. The segment covering 30–44 has biased composition (basic and acidic residues); that stretch reads EHPRGSVHEQLSKKS. Thr-73 is subject to Phosphothreonine; by GSK3. 2 stretches are compositionally biased toward acidic residues: residues 80 to 91 and 121 to 130; these read GDDEDACSDTET and SSGEEDSDLS. Ser-87 carries the post-translational modification Phosphoserine; by CK2. Basic and acidic residues predominate over residues 131–144; it reads PEEREKKRQFEMRR. The interval 147-150 is required for binding PPP1CC catalytic center, displacing metal ions and inhibition of PPP1CC catalytic activity; that stretch reads HYNE. Positions 182 to 205 are enriched in polar residues; that stretch reads SMNTEESNQGSTASDQQQNKSRSS.

This sequence belongs to the protein phosphatase inhibitor 2 family.

Its function is as follows. Inhibitor of protein-phosphatase 1. The protein is Putative protein phosphatase inhibitor 2-like protein 1 (PPP1R2P1) of Homo sapiens (Human).